We begin with the raw amino-acid sequence, 988 residues long: Protein argonaute 10 (988 aa).

A compositionally biased stretch (basic and acidic residues) spans 1–11 (MPIRQMKDSSE). The segment at 1–103 (MPIRQMKDSS…PPSQTTSSAV (103 aa)) is disordered. The span at 41–57 (PVTVTTPATVTQSQASS) shows a compositional bias: low complexity. Basic residues predominate over residues 64–73 (NRSRRRNRGG). The PAZ domain occupies 338-451 (PVIEFVAQLL…LPMEACKIVE (114 aa)). One can recognise a Piwi domain in the interval 625 to 946 (LLLAILPDNN…AAFRARFYLE (322 aa)).

It belongs to the argonaute family. Ago subfamily. As to quaternary structure, interacts with GATA18/HAN and KNAT1/BP. Interacts with RICE1 and RICE2 that act as cofactors. Expressed in roots, stems, leaves, developing embryo, siliques, inflorescences, provascular tissue, shoot apical meristem (SAM) and adaxial (upper) sides of lateral organ primordia. Observed in the floral meristem, the adaxial side of sepal primordia, and the provascular tissue.

It is found in the cytoplasm. Involved in RNA-mediated post-transcriptional gene silencing (PTGS). Main component of the RNA-induced silencing complex (RISC) that binds to a short guide RNA such as a microRNA (miRNA) or small interfering RNA (siRNA). RISC uses the mature miRNA or siRNA as a guide for slicer-directed cleavage of homologous mRNAs to repress gene expression. Required for reliable formation of primary and axillary shoot apical meristems. Specifies leaf adaxial identity by repressing the miR165 and miR166 microRNAs in the embryonic shoot apex, in the shoot apical meristem (SAM) and leaf. Represses the microRNA miR398 which targets CCS1 chaperone mRNAs for translational inhibition. Acts as a negative regulator of AGO1 protein level. Like AGO1, is required for stem cell function and organ polarity. Unlike AGO1, is not subjected to small RNA-mediated repression itself. Essential for multiple processes in development. Coregulates, with GATA18/HAN, the shoot apical meristem (SAM) organization. In Arabidopsis thaliana (Mouse-ear cress), this protein is Protein argonaute 10.